An 87-amino-acid polypeptide reads, in one-letter code: Phosphoribosyl-ATP pyrophosphatase (87 aa).

This sequence belongs to the PRA-PH family.

The protein localises to the cytoplasm. The catalysed reaction is 1-(5-phospho-beta-D-ribosyl)-ATP + H2O = 1-(5-phospho-beta-D-ribosyl)-5'-AMP + diphosphate + H(+). The protein operates within amino-acid biosynthesis; L-histidine biosynthesis; L-histidine from 5-phospho-alpha-D-ribose 1-diphosphate: step 2/9. This is Phosphoribosyl-ATP pyrophosphatase from Thermobifida fusca (strain YX).